The sequence spans 295 residues: Ankyrin repeat and SOCS box protein 17 (295 aa).

One copy of the ANK repeat lies at 146–176 (SGITPLLYVAQTRQSNILKILLQYGILEREN). Residues 232 to 295 (LGRRPIISNW…CLQNYLNLES (64 aa)) form the SOCS box domain.

This sequence belongs to the ankyrin SOCS box (ASB) family.

It participates in protein modification; protein ubiquitination. Its function is as follows. May be a substrate-recognition component of a SCF-like ECS (Elongin-Cullin-SOCS-box protein) E3 ubiquitin-protein ligase complex which mediates the ubiquitination and subsequent proteasomal degradation of target proteins. The protein is Ankyrin repeat and SOCS box protein 17 (ASB17) of Bos taurus (Bovine).